Consider the following 271-residue polypeptide: Formamidopyrimidine-DNA glycosylase (271 aa).

The active-site Schiff-base intermediate with DNA is the Pro-2. Glu-3 functions as the Proton donor in the catalytic mechanism. The active-site Proton donor; for beta-elimination activity is Lys-58. Residues His-91 and Arg-109 each coordinate DNA. The segment at 236–270 (FVYGREGLACRVCATPVRRVVIGQRSTFFCPRCQR) adopts an FPG-type zinc-finger fold. Arg-260 acts as the Proton donor; for delta-elimination activity in catalysis.

This sequence belongs to the FPG family. As to quaternary structure, monomer. Zn(2+) is required as a cofactor.

The enzyme catalyses Hydrolysis of DNA containing ring-opened 7-methylguanine residues, releasing 2,6-diamino-4-hydroxy-5-(N-methyl)formamidopyrimidine.. The catalysed reaction is 2'-deoxyribonucleotide-(2'-deoxyribose 5'-phosphate)-2'-deoxyribonucleotide-DNA = a 3'-end 2'-deoxyribonucleotide-(2,3-dehydro-2,3-deoxyribose 5'-phosphate)-DNA + a 5'-end 5'-phospho-2'-deoxyribonucleoside-DNA + H(+). Functionally, involved in base excision repair of DNA damaged by oxidation or by mutagenic agents. Acts as a DNA glycosylase that recognizes and removes damaged bases. Has a preference for oxidized purines, such as 7,8-dihydro-8-oxoguanine (8-oxoG). Has AP (apurinic/apyrimidinic) lyase activity and introduces nicks in the DNA strand. Cleaves the DNA backbone by beta-delta elimination to generate a single-strand break at the site of the removed base with both 3'- and 5'-phosphates. The polypeptide is Formamidopyrimidine-DNA glycosylase (Aromatoleum aromaticum (strain DSM 19018 / LMG 30748 / EbN1) (Azoarcus sp. (strain EbN1))).